A 685-amino-acid polypeptide reads, in one-letter code: UvrABC system protein B (685 aa).

The 159-residue stretch at 30 to 188 (DGVLRGDRWQ…QELVSLHYIR (159 aa)) folds into the Helicase ATP-binding domain. 43–50 (GVTGSGKT) is a binding site for ATP. A Beta-hairpin motif is present at residues 96–119 (YYDFYQPEAYLPALDKYIAKDLRI). One can recognise a Helicase C-terminal domain in the interval 435-597 (QIDDLLAEIR…ITPRSIRKSL (163 aa)). The UVR domain occupies 641–676 (YAMVAELRLEMNEAAIQMEYEKAAYLRDEIARLMHG).

This sequence belongs to the UvrB family. As to quaternary structure, forms a heterotetramer with UvrA during the search for lesions. Interacts with UvrC in an incision complex.

The protein resides in the cytoplasm. Functionally, the UvrABC repair system catalyzes the recognition and processing of DNA lesions. A damage recognition complex composed of 2 UvrA and 2 UvrB subunits scans DNA for abnormalities. Upon binding of the UvrA(2)B(2) complex to a putative damaged site, the DNA wraps around one UvrB monomer. DNA wrap is dependent on ATP binding by UvrB and probably causes local melting of the DNA helix, facilitating insertion of UvrB beta-hairpin between the DNA strands. Then UvrB probes one DNA strand for the presence of a lesion. If a lesion is found the UvrA subunits dissociate and the UvrB-DNA preincision complex is formed. This complex is subsequently bound by UvrC and the second UvrB is released. If no lesion is found, the DNA wraps around the other UvrB subunit that will check the other stand for damage. This chain is UvrABC system protein B, found in Chlorobium phaeobacteroides (strain DSM 266 / SMG 266 / 2430).